Reading from the N-terminus, the 99-residue chain is RNA-binding protein Hfq (99 aa).

Residues 9–68 (DPFLNALRRERVPVSIYLVNGIKLQGQIESFDQFVILLKNTVSQMVYKHAISTVVPSRPV) enclose the Sm domain. Positions 64–99 (PSRPVSHHSNNPGGGSNYHGNNTAASQQSQEADDAE) are disordered.

Belongs to the Hfq family. As to quaternary structure, homohexamer.

RNA chaperone that binds small regulatory RNA (sRNAs) and mRNAs to facilitate mRNA translational regulation in response to envelope stress, environmental stress and changes in metabolite concentrations. Also binds with high specificity to tRNAs. This Pectobacterium carotovorum subsp. carotovorum (strain PC1) protein is RNA-binding protein Hfq.